The following is a 313-amino-acid chain: Ribonuclease HIII (313 aa).

The RNase H type-2 domain maps to Y98–K313. A divalent metal cation is bound by residues D104, E105, and D208.

This sequence belongs to the RNase HII family. RnhC subfamily. Requires Mn(2+) as cofactor. Mg(2+) is required as a cofactor.

It localises to the cytoplasm. The enzyme catalyses Endonucleolytic cleavage to 5'-phosphomonoester.. In terms of biological role, endonuclease that specifically degrades the RNA of RNA-DNA hybrids. The polypeptide is Ribonuclease HIII (Macrococcus caseolyticus (strain JCSC5402) (Macrococcoides caseolyticum)).